A 379-amino-acid chain; its full sequence is UDP-4-amino-4-deoxy-L-arabinose--oxoglutarate aminotransferase (379 aa).

At K182 the chain carries N6-(pyridoxal phosphate)lysine.

This sequence belongs to the DegT/DnrJ/EryC1 family. ArnB subfamily. In terms of assembly, homodimer. Pyridoxal 5'-phosphate serves as cofactor.

The enzyme catalyses UDP-4-amino-4-deoxy-beta-L-arabinose + 2-oxoglutarate = UDP-beta-L-threo-pentopyranos-4-ulose + L-glutamate. It functions in the pathway nucleotide-sugar biosynthesis; UDP-4-deoxy-4-formamido-beta-L-arabinose biosynthesis; UDP-4-deoxy-4-formamido-beta-L-arabinose from UDP-alpha-D-glucuronate: step 2/3. The protein operates within bacterial outer membrane biogenesis; lipopolysaccharide biosynthesis. In terms of biological role, catalyzes the conversion of UDP-4-keto-arabinose (UDP-Ara4O) to UDP-4-amino-4-deoxy-L-arabinose (UDP-L-Ara4N). The modified arabinose is attached to lipid A and is required for resistance to polymyxin and cationic antimicrobial peptides. The sequence is that of UDP-4-amino-4-deoxy-L-arabinose--oxoglutarate aminotransferase from Escherichia coli O81 (strain ED1a).